The sequence spans 242 residues: DnaJ homolog subfamily B member 6 (242 aa).

Residues 2–69 form the J domain; the sequence is VDYYEVLGVQ…KKRDIYDRYG (68 aa). Residues 2-146 are interaction with HSP70; the sequence is VDYYEVLGVQ…TGSFFSTFSG (145 aa). The segment at 119 to 242 is interaction with KRT18; that stretch reads FEDFFGHRRG…KEQLLRLDNK (124 aa). R135 is subject to Omega-N-methylarginine.

Homooligomer. Interacts with BAG3, HSPB8 and STUB1. Interacts with ALKBH1. Interacts with HSP70, KRT18 and PTTG. Expressed in all tissues examined with highest expression in brain and retina and lower levels observed in testis, spleen, heart, liver and kidney.

The protein resides in the cytoplasm. The protein localises to the perinuclear region. It localises to the nucleus. Its subcellular location is the myofibril. It is found in the sarcomere. The protein resides in the z line. In terms of biological role, has a stimulatory effect on the ATPase activity of HSP70 in a dose-dependent and time-dependent manner and hence acts as a co-chaperone of HSP70. Plays an indispensable role in the organization of KRT8/KRT18 filaments. Acts as an endogenous molecular chaperone for neuronal proteins including huntingtin. Suppresses aggregation and toxicity of polyglutamine-containing, aggregation-prone proteins. Also reduces cellular toxicity and caspase-3 activity. The protein is DnaJ homolog subfamily B member 6 (DNAJB6) of Bos taurus (Bovine).